The following is a 399-amino-acid chain: S-adenosylmethionine synthase (399 aa).

Histidine 17 lines the ATP pocket. Aspartate 19 lines the Mg(2+) pocket. Glutamate 45 is a K(+) binding site. L-methionine contacts are provided by glutamate 58 and glutamine 101. The flexible loop stretch occupies residues 101–111 (QSADIAMGVDQ). ATP-binding positions include 177 to 179 (DGK), 244 to 245 (RF), aspartate 253, 259 to 260 (RK), alanine 276, and lysine 280. Residue aspartate 253 participates in L-methionine binding. Lysine 284 is a binding site for L-methionine.

Belongs to the AdoMet synthase family. As to quaternary structure, homotetramer; dimer of dimers. Mg(2+) is required as a cofactor. K(+) serves as cofactor.

The protein localises to the cytoplasm. The enzyme catalyses L-methionine + ATP + H2O = S-adenosyl-L-methionine + phosphate + diphosphate. The protein operates within amino-acid biosynthesis; S-adenosyl-L-methionine biosynthesis; S-adenosyl-L-methionine from L-methionine: step 1/1. Catalyzes the formation of S-adenosylmethionine (AdoMet) from methionine and ATP. The overall synthetic reaction is composed of two sequential steps, AdoMet formation and the subsequent tripolyphosphate hydrolysis which occurs prior to release of AdoMet from the enzyme. This Bacillus anthracis (strain A0248) protein is S-adenosylmethionine synthase.